A 427-amino-acid polypeptide reads, in one-letter code: MTTVVLIGTQWGDEGKGKITDFLAEKADLVVRYQGGNNAGHTVVVGENSFKLHLIPSGILYPEKICVIGNGVVIDPKVLKEELEYLRQRGVTTANLKISLRAHLIMPYHKKLDELEEEDKGENKIGTTKRGIGPAYRDKAARTGIRVCDLLDKELFAEKLALNLKEKNNLLEKIYGVEGFSYDELYHEYLEYAEIIRPYATDTSRLINDAIESGQKVLFEGAQGTLLDLDHGTYPYVTSSHPVAGAACIGAGIGPTKIHEVIGVVKAYTTRVGSGPFPTELLDETGEFLRKQGYEFGTTTGRPRRCGWFDGVIARYAARVNGLSGLAVTKLDVLTGLKTIKIAVGYRFNGKVINEFPASLKELSQCEPVYEELPGWSEDITGARKLTDLPENARNYLRKIEEITGVPIKIISVGTRRDQTIILDQVF.

GTP is bound by residues 12–18 (GDEGKGK) and 40–42 (GHT). Residue Asp-13 is the Proton acceptor of the active site. Residues Asp-13 and Gly-40 each contribute to the Mg(2+) site. IMP contacts are provided by residues 13–16 (DEGK), 38–41 (NAGH), Thr-128, Arg-142, Gln-223, Thr-238, and Arg-302. The Proton donor role is filled by His-41. 298 to 304 (TTTGRPR) lines the substrate pocket. GTP-binding positions include Arg-304, 330–332 (KLD), and 412–414 (SVG).

Belongs to the adenylosuccinate synthetase family. Homodimer. Requires Mg(2+) as cofactor.

It localises to the cytoplasm. The enzyme catalyses IMP + L-aspartate + GTP = N(6)-(1,2-dicarboxyethyl)-AMP + GDP + phosphate + 2 H(+). Its pathway is purine metabolism; AMP biosynthesis via de novo pathway; AMP from IMP: step 1/2. Functionally, plays an important role in the de novo pathway of purine nucleotide biosynthesis. Catalyzes the first committed step in the biosynthesis of AMP from IMP. The sequence is that of Adenylosuccinate synthetase from Carboxydothermus hydrogenoformans (strain ATCC BAA-161 / DSM 6008 / Z-2901).